Here is a 369-residue protein sequence, read N- to C-terminus: 4-hydroxy-3-methylbut-2-en-1-yl diphosphate synthase (flavodoxin) (369 aa).

Cys-270, Cys-273, Cys-305, and Glu-312 together coordinate [4Fe-4S] cluster.

This sequence belongs to the IspG family. It depends on [4Fe-4S] cluster as a cofactor.

The enzyme catalyses (2E)-4-hydroxy-3-methylbut-2-enyl diphosphate + oxidized [flavodoxin] + H2O + 2 H(+) = 2-C-methyl-D-erythritol 2,4-cyclic diphosphate + reduced [flavodoxin]. It functions in the pathway isoprenoid biosynthesis; isopentenyl diphosphate biosynthesis via DXP pathway; isopentenyl diphosphate from 1-deoxy-D-xylulose 5-phosphate: step 5/6. Converts 2C-methyl-D-erythritol 2,4-cyclodiphosphate (ME-2,4cPP) into 1-hydroxy-2-methyl-2-(E)-butenyl 4-diphosphate. The polypeptide is 4-hydroxy-3-methylbut-2-en-1-yl diphosphate synthase (flavodoxin) (Pseudomonas syringae pv. tomato (strain ATCC BAA-871 / DC3000)).